The sequence spans 217 residues: Large ribosomal subunit protein uL3 (217 aa).

This sequence belongs to the universal ribosomal protein uL3 family. Part of the 50S ribosomal subunit. Forms a cluster with proteins L14 and L19.

Functionally, one of the primary rRNA binding proteins, it binds directly near the 3'-end of the 23S rRNA, where it nucleates assembly of the 50S subunit. The sequence is that of Large ribosomal subunit protein uL3 from Mycobacterium sp. (strain KMS).